Consider the following 198-residue polypeptide: Outer-membrane lipoprotein carrier protein (198 aa).

Residues 1 to 16 form the signal peptide; the sequence is MKKWLVVFFLSASALA.

Belongs to the LolA family. In terms of assembly, monomer.

It is found in the periplasm. In terms of biological role, participates in the translocation of lipoproteins from the inner membrane to the outer membrane. Only forms a complex with a lipoprotein if the residue after the N-terminal Cys is not an aspartate (The Asp acts as a targeting signal to indicate that the lipoprotein should stay in the inner membrane). This is Outer-membrane lipoprotein carrier protein from Vibrio vulnificus (strain YJ016).